A 756-amino-acid chain; its full sequence is 3-O-alpha-D-glucosyl-L-rhamnose phosphorylase (756 aa).

Residue 358 to 359 (WD) coordinates substrate. The active-site Proton donor is the glutamate 486. 590–591 (KQ) serves as a coordination point for substrate.

The protein belongs to the glycosyl hydrolase 65 family. In terms of assembly, monomer.

It localises to the cytoplasm. The enzyme catalyses 3-O-alpha-D-glucosyl-L-rhamnose + phosphate = beta-D-glucose 1-phosphate + L-rhamnopyranose. Its function is as follows. Phosphorylase showing strict alpha-1,3-regioselectivity and producing 3-O-alpha-D-glucopyranosyl-L-rhamnopyranose. Specific for L-rhamnose as acceptor and beta-D-glucose 1-phosphate as donor. Does not phosphorylate alpha,alpha-trehalose, kojibiose, nigerose, or maltose. The protein is 3-O-alpha-D-glucosyl-L-rhamnose phosphorylase of Lachnoclostridium phytofermentans (strain ATCC 700394 / DSM 18823 / ISDg) (Clostridium phytofermentans).